The primary structure comprises 153 residues: NADPH-dependent 7-cyano-7-deazaguanine reductase (153 aa).

Residues 1–17 (MTDTRNLTQLGSKTQAP) are compositionally biased toward polar residues. Residues 1-23 (MTDTRNLTQLGSKTQAPASPEAA) form a disordered region. The active-site Thioimide intermediate is the Cys51. Residue Asp58 is the Proton donor of the active site. Substrate is bound by residues 73–75 (VES) and 92–93 (HE).

The protein belongs to the GTP cyclohydrolase I family. QueF type 1 subfamily.

It localises to the cytoplasm. The enzyme catalyses 7-aminomethyl-7-carbaguanine + 2 NADP(+) = 7-cyano-7-deazaguanine + 2 NADPH + 3 H(+). The protein operates within tRNA modification; tRNA-queuosine biosynthesis. Catalyzes the NADPH-dependent reduction of 7-cyano-7-deazaguanine (preQ0) to 7-aminomethyl-7-deazaguanine (preQ1). The chain is NADPH-dependent 7-cyano-7-deazaguanine reductase from Chelativorans sp. (strain BNC1).